Reading from the N-terminus, the 603-residue chain is MEASKCFGPRTLPIIHNVPLCLKTNFSLFPCRLLQSQSLSSKKSTKHYLFRVKAETSGDLESTRPLTYFSPSYWGDHFLSVSIDDSEFEALEKEIETVFKPKVRDMLMSPHSSDKERIRLIHLLISLGIAYYYENEIEEILHKAYGKLACLISDEDDLETIAIMFEVFRLYGHKMPCDVFERFKSEDGKFKESLVGDVRGLLQLYEAAHLGAPSEDIMDEALSFARYHLEPLAGTETSSNLFKHVENVLYRARYHSIEILVARQYISFYDQEEDQDETLLRFSKLNFNFCQMHYVKELKIVTRWWKELGIASKLPYSIRERNVETYLGGLGVLFEPRYSLARIFLAKLTLIMTVVDDTCDAYATLPEVQSLHDAFHRWDLRAMEELPRYMRIIYQSVFETVEDIDREMIARGKHGRLQLTIDEIKSLMIWYLGIAKWARSDQVPSFEDYMEIGTPSSALDDFASYGFIAMDDCDQKQLKEWFYSKPKIFHALNALFRIRNDIVTFEQEMSRGEVANGVNCYMKQHGVTKEAAVEELRKMERESYKIMIEEFMTSKAMPRQILVRPVNIARVMDLFYKEADGFGHPDQKLLQLIASLFLHPIPL.

5 residues coordinate Mg(2+): D356, D360, N500, T504, and E508. The DDXXD motif motif lies at 356–360; the sequence is DDTCD.

Belongs to the terpene synthase family. Tpsa subfamily. Mg(2+) is required as a cofactor. The cofactor is Mn(2+). Predominantly expressed in roots but also in flowers.

It localises to the cytoplasm. It functions in the pathway secondary metabolite biosynthesis; terpenoid biosynthesis. Involved in terpene biosynthesis in roots. Possesses sesquiterpene (C15) synthase activity in vitro. Does not seem to be involved in diterpene (C20) biosynthesis. The polypeptide is Terpenoid synthase 25 (Arabidopsis thaliana (Mouse-ear cress)).